Reading from the N-terminus, the 534-residue chain is Serine/threonine-protein kinase NLK (534 aa).

2 sufficient for interaction with DAPK3 regions span residues 8-132 (LVSC…KAHH) and 131-423 (HHHQ…SKRI). Required for interaction with TAB2 regions lie at residues 8-311 (LVSC…VVTQ) and 441-534 (YHTC…LVWE). Disordered regions lie at residues 29–79 (AAAA…SSAA) and 97–147 (QQPY…DIEP). Positions 33 to 61 (GHHHHHHHHLPHLPPPHLHHHHHPQHHLH) are enriched in basic residues. Over residues 110–126 (PGPAAAAPAQVQAAAAA) the composition is skewed to low complexity. A compositionally biased stretch (basic residues) spans 129–138 (KAHHHQHSHH). In terms of domain architecture, Protein kinase spans 145–434 (IEPDRPIGYG…AKDALAHPYL (290 aa)). ATP contacts are provided by residues 151 to 159 (IGYGAFGVV) and Lys-174. Asp-271 acts as the Proton acceptor in catalysis. Thr-305 carries the phosphothreonine; by autocatalysis modification. A TQE motif is present at residues 305–307 (TQE). Residues 435 to 534 (DEGRLRYHTC…EMPPSPLVWE (100 aa)) form a required for homodimerization and kinase activation and localization to the nucleus region. A Phosphoserine modification is found at Ser-529.

It belongs to the protein kinase superfamily. CMGC Ser/Thr protein kinase family. MAP kinase subfamily. Homodimer. Homodimerization is required for intermolecular autophosphorylation, kinase activation and nuclear localization. May interact with components of cullin-RING-based SCF (SKP1-CUL1-F-box protein) E3 ubiquitin-protein ligase complexes. Interacts with LEF1, MEF2A, MYBL1 and MYBL2. Interacts with the upstream activating kinases HIPK2 and MAP3K7/TAK1. Interaction with MAP3K7/TAK1 seems to be indirect, and may be mediated by other proteins such as STAT3, TAB1 and TAB2. Interacts with and phosphorylates a number of transcription factors including FOXO1, FOXO3, FOXO4, MYB, NOTCH1 and TCF7L2/TCF4. Interacts with DAPK3/ZIPK, and this interaction may disrupt interaction with transcription factors such as TCF7L2/TCF4. Forms a transcriptional repressor complex with CHD7, PPARG and SETDB1. Interacts with RNF138/NARF. Interacts with ATF5; the interaction stabilizes ATF5 at the protein level in a kinase-independent manner. Mg(2+) is required as a cofactor. In terms of processing, phosphorylated on Thr-305. Intermolecular autophosphorylation on Thr-305 activates the enzyme.

Its subcellular location is the nucleus. It is found in the cytoplasm. The catalysed reaction is L-seryl-[protein] + ATP = O-phospho-L-seryl-[protein] + ADP + H(+). The enzyme catalyses L-threonyl-[protein] + ATP = O-phospho-L-threonyl-[protein] + ADP + H(+). Its activity is regulated as follows. Activated by the non-canonical Wnt signaling pathway, in which WNT5A leads to activation of MAP3K7/TAK1 and HIPK2, which subsequently phosphorylates and activates this protein. Activated by dimerization and subsequent intermolecular autophosphorylation on Thr-305. Other cytokines such as IL6 may also activate this regulatory circuit. In terms of biological role, serine/threonine-protein kinase that regulates a number of transcription factors with key roles in cell fate determination. Positive effector of the non-canonical Wnt signaling pathway, acting downstream of WNT5A, MAP3K7/TAK1 and HIPK2. Negative regulator of the canonical Wnt/beta-catenin signaling pathway. Binds to and phosphorylates TCF7L2/TCF4 and LEF1, promoting the dissociation of the TCF7L2/LEF1/beta-catenin complex from DNA, as well as the ubiquitination and subsequent proteolysis of LEF1. Together these effects inhibit the transcriptional activation of canonical Wnt/beta-catenin target genes. Negative regulator of the Notch signaling pathway. Binds to and phosphorylates NOTCH1, thereby preventing the formation of a transcriptionally active ternary complex of NOTCH1, RBPJ/RBPSUH and MAML1. Negative regulator of the MYB family of transcription factors. Phosphorylation of MYB leads to its subsequent proteolysis while phosphorylation of MYBL1 and MYBL2 inhibits their interaction with the coactivator CREBBP. Other transcription factors may also be inhibited by direct phosphorylation of CREBBP itself. Acts downstream of IL6 and MAP3K7/TAK1 to phosphorylate STAT3, which is in turn required for activation of NLK by MAP3K7/TAK1. Upon IL1B stimulus, cooperates with ATF5 to activate the transactivation activity of C/EBP subfamily members. Phosphorylates ATF5 but also stabilizes ATF5 protein levels in a kinase-independent manner. Acts as an inhibitor of the mTORC1 complex in response to osmotic stress by mediating phosphorylation of RPTOR, thereby preventing recruitment of the mTORC1 complex to lysosomes. This chain is Serine/threonine-protein kinase NLK (NLK), found in Bos taurus (Bovine).